We begin with the raw amino-acid sequence, 184 residues long: Protein GrpE (184 aa).

A compositionally biased stretch (basic and acidic residues) spans 1 to 12; that stretch reads MADEQLNEKDLN. Positions 1–22 are disordered; that stretch reads MADEQLNEKDLNAEEAGAVDNG.

Belongs to the GrpE family. Homodimer.

It is found in the cytoplasm. In terms of biological role, participates actively in the response to hyperosmotic and heat shock by preventing the aggregation of stress-denatured proteins, in association with DnaK and GrpE. It is the nucleotide exchange factor for DnaK and may function as a thermosensor. Unfolded proteins bind initially to DnaJ; upon interaction with the DnaJ-bound protein, DnaK hydrolyzes its bound ATP, resulting in the formation of a stable complex. GrpE releases ADP from DnaK; ATP binding to DnaK triggers the release of the substrate protein, thus completing the reaction cycle. Several rounds of ATP-dependent interactions between DnaJ, DnaK and GrpE are required for fully efficient folding. The protein is Protein GrpE of Pseudomonas putida (strain W619).